The primary structure comprises 371 residues: 4-hydroxybutyrate dehydrogenase (371 aa).

Residues 88-92, 126-130, and Lys148 each bind NAD(+); these read GSVID and TTCGT. Residues Asp182, His186, His253, and His267 each coordinate Fe cation. His267 provides a ligand contact to NAD(+).

It belongs to the iron-containing alcohol dehydrogenase family. As to quaternary structure, homodimer. The cofactor is Fe(2+). Requires Cu(2+) as cofactor.

It catalyses the reaction 4-hydroxybutanoate + NAD(+) = succinate semialdehyde + NADH + H(+). Its activity is regulated as follows. Inactivated by oxygen. Its function is as follows. Involved in the anaerobic succinate degradation pathway. Catalyzes the interconversion of gamma-hydroxybutyrate (GHB) and succinic semialdehyde (SSA). This is 4-hydroxybutyrate dehydrogenase from Clostridium kluyveri (strain ATCC 8527 / DSM 555 / NBRC 12016 / NCIMB 10680 / K1).